Consider the following 121-residue polypeptide: MKSALHESRADTAEATSSASSAWKSVRALPARTLIFFIELYRTYVSPLRMPTCRFMPTCSEYAVESLRTHGVIKGLFLTVVRLAKCAPWHPGGWDPVPARRDRHAGGRRCCPANVDEQRST.

The disordered stretch occupies residues 97-121 (VPARRDRHAGGRRCCPANVDEQRST).

This sequence belongs to the UPF0161 family.

The protein resides in the cell membrane. In terms of biological role, could be involved in insertion of integral membrane proteins into the membrane. This chain is Putative membrane protein insertion efficiency factor, found in Rhodococcus jostii (strain RHA1).